A 73-amino-acid chain; its full sequence is Salivary protein FS48 (73 aa).

The signal sequence occupies residues 1–21 (MKFAFAIFVVLAILHTELISA).

The protein localises to the secreted. In terms of biological role, salivary protein that inhibits host voltage-gated potassium channels Kv1.1/KCNA1, Kv1.2/KCNA2 and Kv1.3/KCNA3 likely via a voltage-independent pore-blocking mechanism. Suppresses expression of the Kv1.3/KCNA3 channel in lipopolysaccharide (LPS)-stimulated mouse macrophages and human T-cells. Down-regulates secretion of nitric oxide (NO) and inflammatory cytokines, such as TNF-alpha/TNF, IL-1beta/IL1B and IL6, in LPS-stimulated mouse macrophages in a manner dependent on Kv1.3/KCNA3 channel blockage. Reduces activation of MAPK and NF-kappa-B signaling pathways in LPS-stimulated mouse macrophages. Modulates intracellular Ca(2+) signaling in human PMA/ionomycin-triggered T-cells. Interferes with the activation of the MAPK, NF-kappa-B and NFATc1 pathways in human PMA/ionomycin-triggered T-cells. Reduces proliferation of human PMA/ionomycin-triggered T-cells. Down-regulates secretion of cytokines, such as TNF-alpha/TNF and IL2, in human PMA/ionomycin-triggered T-cells. This is Salivary protein FS48 from Xenopsylla cheopis (Oriental rat flea).